Here is a 385-residue protein sequence, read N- to C-terminus: 8-amino-7-oxononanoate synthase (385 aa).

Substrate is bound at residue Arg-21. 108-109 (GF) lines the pyridoxal 5'-phosphate pocket. His-133 is a binding site for substrate. 3 residues coordinate pyridoxal 5'-phosphate: Ser-179, His-207, and Thr-233. Lys-236 is modified (N6-(pyridoxal phosphate)lysine). Thr-352 serves as a coordination point for substrate.

The protein belongs to the class-II pyridoxal-phosphate-dependent aminotransferase family. BioF subfamily. In terms of assembly, homodimer. Pyridoxal 5'-phosphate serves as cofactor.

It carries out the reaction 6-carboxyhexanoyl-[ACP] + L-alanine + H(+) = (8S)-8-amino-7-oxononanoate + holo-[ACP] + CO2. It functions in the pathway cofactor biosynthesis; biotin biosynthesis. In terms of biological role, catalyzes the decarboxylative condensation of pimeloyl-[acyl-carrier protein] and L-alanine to produce 8-amino-7-oxononanoate (AON), [acyl-carrier protein], and carbon dioxide. The chain is 8-amino-7-oxononanoate synthase from Salmonella schwarzengrund (strain CVM19633).